Here is a 336-residue protein sequence, read N- to C-terminus: Galectin-12 (336 aa).

2 Galectin domains span residues 49 to 183 (YVTT…VGFL) and 212 to 336 (CSHA…CVHS).

In terms of tissue distribution, not widely expressed. Predominantly expressed in adipose tissue.

It localises to the nucleus. In terms of biological role, binds lactose. May participate in the apoptosis of adipocytes. This chain is Galectin-12 (LGALS12), found in Homo sapiens (Human).